Here is a 211-residue protein sequence, read N- to C-terminus: Adenylate kinase (211 aa).

G10 to T15 contributes to the ATP binding site. Residues S30 to V59 are NMP. AMP-binding positions include T31, R36, L57–V59, G84–R87, and Q91. The segment at G125–D162 is LID. Residue R126 participates in ATP binding. Zn(2+) is bound by residues C129 and C132. An ATP-binding site is contributed by T135–Y136. Zn(2+) is bound by residues C149 and D152. Residues R159 and R170 each coordinate AMP. G198 serves as a coordination point for ATP.

It belongs to the adenylate kinase family. As to quaternary structure, monomer.

The protein resides in the cytoplasm. The catalysed reaction is AMP + ATP = 2 ADP. Its pathway is purine metabolism; AMP biosynthesis via salvage pathway; AMP from ADP: step 1/1. Functionally, catalyzes the reversible transfer of the terminal phosphate group between ATP and AMP. Plays an important role in cellular energy homeostasis and in adenine nucleotide metabolism. The polypeptide is Adenylate kinase (Hydrogenobaculum sp. (strain Y04AAS1)).